A 90-amino-acid chain; its full sequence is DNA-directed RNA polymerase subunit omega (90 aa).

The segment at 70–90 (QEQQEQEAAELAAVSSIMHNR) is disordered.

The protein belongs to the RNA polymerase subunit omega family. As to quaternary structure, the RNAP catalytic core consists of 2 alpha, 1 beta, 1 beta' and 1 omega subunit. When a sigma factor is associated with the core the holoenzyme is formed, which can initiate transcription.

The enzyme catalyses RNA(n) + a ribonucleoside 5'-triphosphate = RNA(n+1) + diphosphate. Promotes RNA polymerase assembly. Latches the N- and C-terminal regions of the beta' subunit thereby facilitating its interaction with the beta and alpha subunits. The sequence is that of DNA-directed RNA polymerase subunit omega from Vibrio cholerae serotype O1 (strain ATCC 39541 / Classical Ogawa 395 / O395).